Here is a 198-residue protein sequence, read N- to C-terminus: MRAFVLRARSAPTNSQLLLESVGQEAHTEILAHTLMNAIFVAQSHRDDVIVHLVLESTQDFSRTISFTSSEITNVGGFHEQALLTKIARALDLSQGMTKEQERKVEPGITVRTVSFEKLVQELAEDYQLFMMDKKGTNIREQEFEGNPCFLLTDHIPMPKKSFNSLKRLGATKISLGPKMLFASQCVVLIHNELDINM.

S-adenosyl-L-methionine-binding residues include Met-132 and Cys-186.

Belongs to the methyltransferase superfamily. TrmY family.

The protein resides in the cytoplasm. In Photobacterium profundum (strain SS9), this protein is Putative pseudouridine methyltransferase.